The chain runs to 315 residues: Taste receptor type 2 member 3 (315 aa).

Topologically, residues 1–5 (MGLTE) are extracellular. The helical transmembrane segment at 6–26 (GLFLILSGTQFALGILVNCFI) threads the bilayer. The Cytoplasmic segment spans residues 27 to 41 (GLVNGSSWFKTKRMS). The helical transmembrane segment at 42-62 (LSDFIITTLAFLRIILLCIIL) threads the bilayer. Residues 63–93 (TDSFLIEFSPNAHDSGVIMQIIDVSWTFTNH) lie on the Extracellular side of the membrane. Residues 94–114 (LSIWLATCLGVLYCLKIASFS) form a helical membrane-spanning segment. At 115 to 127 (HPTFLWLKWRVSR) the chain is on the cytoplasmic side. A helical transmembrane segment spans residues 128–148 (VMVWMLLGVLLLSCGSTASLI). Residues 149–185 (NEFKLYSVFRGIEATXNVTEHFRKKRSEYYLIHVLGT) are Extracellular-facing. The N-linked (GlcNAc...) asparagine glycan is linked to Asn165. The helical transmembrane segment at 186–206 (LWYLPPLIVSLAAYFLLIFSL) threads the bilayer. Residues 207–233 (GRHTRQMLQNGTSSRDPSTEAHKRAIR) lie on the Cytoplasmic side of the membrane. Residues 234-254 (IILSSFFLFLLYFLAFLIASF) traverse the membrane as a helical segment. At 255–265 (GNFLPKTKMAK) the chain is on the extracellular side. A helical transmembrane segment spans residues 266 to 286 (MIGEVMTMFYPAGHSFILILG). The Cytoplasmic segment spans residues 287–315 (NSKLKQTFVEMLRCESGHLKPGSKGPIFS).

The protein belongs to the G-protein coupled receptor T2R family.

The protein localises to the membrane. Its function is as follows. Gustducin-coupled receptor implicated in the perception of bitter compounds in the oral cavity and the gastrointestinal tract. Signals through PLCB2 and the calcium-regulated cation channel TRPM5. The polypeptide is Taste receptor type 2 member 3 (TAS2R3) (Pongo pygmaeus (Bornean orangutan)).